Consider the following 1013-residue polypeptide: AP-2 complex subunit alpha-2 (1013 aa).

HEAT repeat units follow at residues 254 to 289, 354 to 391, 393 to 430, and 521 to 565; these read AMRA…VVKN, DIIK…VSNA, DIVE…DLSW, and TVST…CIDV. A disordered region spans residues 652-676; it reads STDPESVARSLSHPNGTLSNIDPQT. Polar residues predominate over residues 663–675; it reads SHPNGTLSNIDPQ. One can recognise a GAE domain in the interval 742-841; the sequence is ALCLKDSGVL…LDFSYKFGTN (100 aa). Residues 760-1013 are required for AP180 binding; that stretch reads GIKAEWRGHH…DPGAMLAGLL (254 aa).

This sequence belongs to the adaptor complexes large subunit family. As to quaternary structure, adaptor protein complex 2 (AP-2) is a heterotetramer composed of two large adaptins (alpha-type and beta-type subunits), a medium adaptin (mu-type subunit) and a small adaptin (sigma-type subunit). Interacts with AP180.

Its subcellular location is the membrane. It localises to the coated pit. In terms of biological role, subunit of the adaptor protein complex 2 (AP-2). Adaptor protein complexes function in protein transport via transport vesicles in different membrane traffic pathways. Adaptor protein complexes are vesicle coat components and appear to be involved in cargo selection and vesicle formation. AP-2 is involved in clathrin-dependent endocytosis in which cargo proteins are incorporated into vesicles surrounded by clathrin (clathrin-coated vesicles, CCVs) which are destined for fusion with the early endosome. The complex binds polyphosphoinositides. This Arabidopsis thaliana (Mouse-ear cress) protein is AP-2 complex subunit alpha-2 (ALPHAC-AD).